The chain runs to 295 residues: Pyridoxal 5'-phosphate synthase subunit PdxS (295 aa).

Aspartate 25 is a binding site for D-ribose 5-phosphate. The Schiff-base intermediate with D-ribose 5-phosphate role is filled by lysine 82. Glycine 154 contributes to the D-ribose 5-phosphate binding site. D-glyceraldehyde 3-phosphate is bound at residue arginine 166. Residues glycine 215 and 236–237 (GS) contribute to the D-ribose 5-phosphate site.

This sequence belongs to the PdxS/SNZ family. As to quaternary structure, in the presence of PdxT, forms a dodecamer of heterodimers.

The catalysed reaction is aldehydo-D-ribose 5-phosphate + D-glyceraldehyde 3-phosphate + L-glutamine = pyridoxal 5'-phosphate + L-glutamate + phosphate + 3 H2O + H(+). It participates in cofactor biosynthesis; pyridoxal 5'-phosphate biosynthesis. Functionally, catalyzes the formation of pyridoxal 5'-phosphate from ribose 5-phosphate (RBP), glyceraldehyde 3-phosphate (G3P) and ammonia. The ammonia is provided by the PdxT subunit. Can also use ribulose 5-phosphate and dihydroxyacetone phosphate as substrates, resulting from enzyme-catalyzed isomerization of RBP and G3P, respectively. The chain is Pyridoxal 5'-phosphate synthase subunit PdxS from Actinobacillus pleuropneumoniae serotype 3 (strain JL03).